The primary structure comprises 466 residues: RUS family member 1 (466 aa).

An N-acetylalanine modification is found at Ala2. The helical transmembrane segment at 245–265 (LLMLPLVSDCPSLSLGCFVLL) threads the bilayer.

Belongs to the RUS1 family.

It localises to the membrane. The protein is RUS family member 1 of Mus musculus (Mouse).